Here is a 1682-residue protein sequence, read N- to C-terminus: Calmodulin-binding transcription activator 1 (1682 aa).

The CG-1 DNA-binding region spans 63-188; that stretch reads KCSSLPKERH…YLNVPAIEDC (126 aa). The short motif at 112-119 is the Nuclear localization signal element; that stretch reads RKKVKYRK. Disordered regions lie at residues 284 to 375 and 599 to 622; these read RIIS…MVDS and SSFS…FLQD. Basic and acidic residues predominate over residues 302 to 327; that stretch reads EVQHNDVSEGKHEPSHGRSTSREKRN. Polar residues-rich tracts occupy residues 337 to 367 and 599 to 618; these read HQNS…SGLN and SSFS…SPSF. One can recognise an IPT/TIG domain in the interval 877-955; the sequence is DYSPEWSYPE…ISNSVVFEYK (79 aa). Residues 992-1020 form a disordered region; sequence MAEMTGSQQHKQASGGGGSGSGSGSGAGG. Over residues 1005 to 1020 the composition is skewed to gly residues; sequence SGGGGSGSGSGSGAGG. ANK repeat units follow at residues 1066-1095, 1111-1141, and 1145-1174; these read RGMT…KHAD, FSCT…AISI, and LGRL…DEQA. 2 disordered regions span residues 1217–1249 and 1267–1318; these read ASTN…KKHK and LSLE…SASQ. Residues 1268–1291 show a composition bias toward polar residues; it reads SLEQPNIRKQSPRSKQPSPETISP. Positions 1308–1318 are enriched in low complexity; the sequence is ETAASQASASQ. IQ domains follow at residues 1549 to 1585, 1586 to 1608, and 1609 to 1631; these read QEVA…AAIL, IQSK…AAVL, and IQNF…TAVI.

This sequence belongs to the CAMTA family. As to quaternary structure, may interact with calmodulin.

It localises to the nucleus. Its subcellular location is the cytoplasm. In terms of biological role, transcriptional activator. This Mus musculus (Mouse) protein is Calmodulin-binding transcription activator 1.